Here is a 391-residue protein sequence, read N- to C-terminus: 3-ketoacyl-CoA thiolase (391 aa).

Residue Cys-95 is the Acyl-thioester intermediate of the active site. Catalysis depends on proton acceptor residues His-347 and Cys-377.

The protein belongs to the thiolase-like superfamily. Thiolase family. Heterotetramer of two alpha chains (FadB) and two beta chains (FadA).

The protein resides in the cytoplasm. The catalysed reaction is an acyl-CoA + acetyl-CoA = a 3-oxoacyl-CoA + CoA. Its pathway is lipid metabolism; fatty acid beta-oxidation. In terms of biological role, catalyzes the final step of fatty acid oxidation in which acetyl-CoA is released and the CoA ester of a fatty acid two carbons shorter is formed. The polypeptide is 3-ketoacyl-CoA thiolase (Pseudomonas savastanoi pv. phaseolicola (strain 1448A / Race 6) (Pseudomonas syringae pv. phaseolicola (strain 1448A / Race 6))).